A 412-amino-acid polypeptide reads, in one-letter code: MAQDVCPTRSEPSLSFLQGLILGQLSVVLLIAAFIKFFIFGEAPSAEETASIRATERRSRTLAHKKSLLSLRSAATQRQGSQPPALPALNKKKSSILRSNPPTLTIGSILDKTYYKVDSHQPESLDWFNVLIAQTIAQFRSDAQHDDAILTSLSKTLNGTSRPDFVDEIRVSELSLGEDFPIFSNCRIIPVDEDGLQFGAGKAFDPKQAAREGARLQARMDVDLSDMITLAVETKLLLNFPKRLSAVLPVALAVSVVRFSGTLSISFNPSNPSENTPTKMTFTFLDDYRLDFSIRSLLGSRSRLQDVPKIAQLVESRLHRWFDERCVEPRFQEIELPSMWPRKKNTRGGDEIIANIEQSINKAHGGAIAKEARQELDTETDGLRYRRRPVGDDTYSVSGSMPGSLPGIDMPT.

The Lumenal portion of the chain corresponds to 1 to 19 (MAQDVCPTRSEPSLSFLQG). Residues 20-40 (LILGQLSVVLLIAAFIKFFIF) form a helical membrane-spanning segment. The Cytoplasmic portion of the chain corresponds to 41-412 (GEAPSAEETA…GSLPGIDMPT (372 aa)). Residues 121–337 (QPESLDWFNV…EPRFQEIELP (217 aa)) form the SMP-LTD domain. Residues 372–384 (ARQELDTETDGLR) show a composition bias toward basic and acidic residues. Residues 372-412 (ARQELDTETDGLRYRRRPVGDDTYSVSGSMPGSLPGIDMPT) form a disordered region.

This sequence belongs to the MMM1 family. In terms of assembly, homodimer. Component of the ER-mitochondria encounter structure (ERMES) or MDM complex, composed of MMM1, MDM10, MDM12 and MDM34. An MMM1 homodimer associates with one molecule of MDM12 on each side in a pairwise head-to-tail manner, and the SMP-LTD domains of MMM1 and MDM12 generate a continuous hydrophobic tunnel for phospholipid trafficking.

The protein resides in the endoplasmic reticulum membrane. Its function is as follows. Component of the ERMES/MDM complex, which serves as a molecular tether to connect the endoplasmic reticulum (ER) and mitochondria. Components of this complex are involved in the control of mitochondrial shape and protein biogenesis, and function in nonvesicular lipid trafficking between the ER and mitochondria. The MDM12-MMM1 subcomplex functions in the major beta-barrel assembly pathway that is responsible for biogenesis of all outer membrane beta-barrel proteins, and acts in a late step after the SAM complex. The MDM10-MDM12-MMM1 subcomplex further acts in the TOM40-specific pathway after the action of the MDM12-MMM1 complex. Essential for establishing and maintaining the structure of mitochondria and maintenance of mtDNA nucleoids. The chain is Maintenance of mitochondrial morphology protein 1 from Podospora anserina (strain S / ATCC MYA-4624 / DSM 980 / FGSC 10383) (Pleurage anserina).